A 323-amino-acid polypeptide reads, in one-letter code: Protoheme IX farnesyltransferase (323 aa).

8 consecutive transmembrane segments (helical) span residues 50–70, 97–117, 118–138, 150–170, 184–204, 231–248, 252–274, and 293–313; these read IVLILLTVFGGWMGAAAANTF, NRDASIFAWVLTVASFLWLWL, LCDSMLAGIFVLITIFFYIFV, NIVWGGAAGCMPVLVGWAVIV, AIVLFMVIFFWTPPHTWALAM, IVWYSVATVLTTFLLIPA, IYAAIAVISGVTFLFMAIKLHLG, and YLAVLFVALSVDAVLGLETIG.

The protein belongs to the UbiA prenyltransferase family. Protoheme IX farnesyltransferase subfamily.

The protein localises to the cell membrane. It carries out the reaction heme b + (2E,6E)-farnesyl diphosphate + H2O = Fe(II)-heme o + diphosphate. It functions in the pathway porphyrin-containing compound metabolism; heme O biosynthesis; heme O from protoheme: step 1/1. Converts heme B (protoheme IX) to heme O by substitution of the vinyl group on carbon 2 of heme B porphyrin ring with a hydroxyethyl farnesyl side group. This Corynebacterium glutamicum (strain R) protein is Protoheme IX farnesyltransferase.